We begin with the raw amino-acid sequence, 470 residues long: Ribosomal protein uS12 methylthiotransferase RimO (470 aa).

The MTTase N-terminal domain maps to 4–120 (TRVYLHTLGC…IARVVSDAQA (117 aa)). The [4Fe-4S] cluster site is built by C13, C49, C83, C155, C159, and C162. One can recognise a Radical SAM core domain in the interval 141-371 (SLPSHTAYLK…MALQQEISRE (231 aa)). The TRAM domain occupies 374–442 (RAMVGRRLEV…EYDLVGHVVA (69 aa)). Residues 447-470 (RARRPLPAPAGGETPRRGGLPVVG) form a disordered region.

This sequence belongs to the methylthiotransferase family. RimO subfamily. The cofactor is [4Fe-4S] cluster.

Its subcellular location is the cytoplasm. It catalyses the reaction L-aspartate(89)-[ribosomal protein uS12]-hydrogen + (sulfur carrier)-SH + AH2 + 2 S-adenosyl-L-methionine = 3-methylsulfanyl-L-aspartate(89)-[ribosomal protein uS12]-hydrogen + (sulfur carrier)-H + 5'-deoxyadenosine + L-methionine + A + S-adenosyl-L-homocysteine + 2 H(+). Functionally, catalyzes the methylthiolation of an aspartic acid residue of ribosomal protein uS12. In Anaeromyxobacter sp. (strain Fw109-5), this protein is Ribosomal protein uS12 methylthiotransferase RimO.